The primary structure comprises 430 residues: Ribosomal protein uS12 methylthiotransferase RimO (430 aa).

Residues 2-119 enclose the MTTase N-terminal domain; sequence ISVYSISLGC…WPAMLAHALK (118 aa). Positions 11, 46, 81, 145, 149, and 152 each coordinate [4Fe-4S] cluster. A Radical SAM core domain is found at 131 to 361; it reads STGPSYAWLK…MEVQAEISEE (231 aa). The TRAM domain maps to 364–430; it reads AVHEGTRQQV…TRTYDLVALV (67 aa).

This sequence belongs to the methylthiotransferase family. RimO subfamily. Requires [4Fe-4S] cluster as cofactor.

Its subcellular location is the cytoplasm. It carries out the reaction L-aspartate(89)-[ribosomal protein uS12]-hydrogen + (sulfur carrier)-SH + AH2 + 2 S-adenosyl-L-methionine = 3-methylsulfanyl-L-aspartate(89)-[ribosomal protein uS12]-hydrogen + (sulfur carrier)-H + 5'-deoxyadenosine + L-methionine + A + S-adenosyl-L-homocysteine + 2 H(+). Its function is as follows. Catalyzes the methylthiolation of an aspartic acid residue of ribosomal protein uS12. The sequence is that of Ribosomal protein uS12 methylthiotransferase RimO from Nitratidesulfovibrio vulgaris (strain DP4) (Desulfovibrio vulgaris).